The sequence spans 263 residues: uncharacterized protein (263 aa).

This is an uncharacterized protein from Bacillus subtilis (strain 168).